Consider the following 363-residue polypeptide: Putative serine/threonine-protein kinase gskl-1 (363 aa).

The region spanning 20–304 is the Protein kinase domain; it reads FGAHKLCGSG…AIDVLKMPLF (285 aa). Residues 26 to 34 and K50 each bind ATP; that span reads CGSGRFSNV. D146 (proton acceptor) is an active-site residue. The segment at 311-363 is disordered; the sequence is PPKKRSNGVEMPNLASYTEMHHKREPETEVVADIQTTEKAEKESDSTNEELED. Residues 346–355 are compositionally biased toward basic and acidic residues; the sequence is TTEKAEKESD.

This sequence belongs to the protein kinase superfamily. Ser/Thr protein kinase family. In terms of tissue distribution, expressed during multiple stages of spermatogenesis, in males and hermaphrodites (at protein level).

It localises to the cytoplasm. The protein resides in the cell projection. The protein localises to the pseudopodium. The catalysed reaction is L-seryl-[protein] + ATP = O-phospho-L-seryl-[protein] + ADP + H(+). The enzyme catalyses L-threonyl-[protein] + ATP = O-phospho-L-threonyl-[protein] + ADP + H(+). Functionally, may be an autophosphorylating tyrosine kinase, a bifunctional (serine/tyrosine-specific) protein kinase, or a serine kinase that is a substrate for an associated tyrosine kinase. Acting in concert with putative serine/threonine-protein kinase gskl-2, required for sister chromatid segregation and spermatid budding during male meiosis. Plays a role in regulating female meiosis II, together with gskl-2. Involved in sperm pseudopod formation and function, together with gskl-2. This is Putative serine/threonine-protein kinase gskl-1 from Caenorhabditis elegans.